A 401-amino-acid polypeptide reads, in one-letter code: MPPPLLLLLLLAAAAAAVAPARSKSTLESCSSSTACPALLSYTLYADLKLAELAALFSADPLAILAANSIDFAVPDPADRILPAGLPLRVPVPCACSDGIRRVTTVRYVARPGDTLASVASSVYGGLTTPDWISDSNGILGAKPDAAVDAGTTLFVPLHCACFGGVDNGLPAVYLTYVAGKGDTVAAVAQRYRTTATDLMSVNDMATPELAAGDIIVVPLPACTSSFPAFTADYGLAVANGTYAVTANRCVQCSCGPGNLDLFCVPAPLADSTCSSMQCANSSMMLGNFTLLMTSSGCSVTSCSYGGFVNGTILTTLTTALKPQCPGPHQYPPLIPPPTSSFFETYLGPSPTPMASEGGVMAGMAPTSTPAASSGPPPAGRHVVGDVLGAFALCLVGNLLW.

A signal peptide spans 1 to 23 (MPPPLLLLLLLAAAAAAVAPARS). 4 cysteine pairs are disulfide-bonded: Cys30-Cys96, Cys36-Cys162, Cys94-Cys160, and Cys96-Cys162. 2 LysM domains span residues 106–156 (VRYV…TLFV) and 175–218 (LTYV…IIVV). Cystine bridges form between Cys223/Cys255 and Cys250/Cys279. The N-linked (GlcNAc...) asparagine glycan is linked to Asn240. Residues Asn281, Asn288, and Asn310 are each glycosylated (N-linked (GlcNAc...) asparagine). Ser373 carries the GPI-anchor amidated serine lipid modification. A propeptide spans 374-401 (SGPPPAGRHVVGDVLGAFALCLVGNLLW) (removed in mature form).

As to quaternary structure, interacts with LYP6. Interacts with CEBIP. Interacts with CERK1. In terms of tissue distribution, expressed in roots and leaves.

The protein localises to the cell membrane. Its function is as follows. Functions in innate immunity. Functions as a pattern recognition receptor (PRR), sensing bacterial peptidoglycan (PGN) and fungal chitin at the cell surface. Involved in resistance against the bacterial pathogen Xanthomonas oryzae pv. oryzae (Xoo) and the fungal pathogen Magnaporthe oryzae. Binds PGN and fungal chitin in vitro. Involved in microbe-associated molecular patterns (MAMPs) perception and participates in the activation of defense genes against the bacterial pathogen Xanthomonas oryzae pv. oryzicola (Xoc) or the fungal pathogen Magnaporthe oryzae. This Oryza sativa subsp. japonica (Rice) protein is LysM domain-containing GPI-anchored protein LYP4.